A 321-amino-acid polypeptide reads, in one-letter code: Peroxidase 70 (321 aa).

The N-terminal stretch at 1–25 (MASSSFTSLSVMVLLCLAAAAVASA) is a signal peptide. Gln-26 carries the pyrrolidone carboxylic acid modification. 4 disulfide bridges follow: Cys-36/Cys-116, Cys-69/Cys-74, Cys-122/Cys-317, and Cys-201/Cys-226. His-67 acts as the Proton acceptor in catalysis. Ca(2+) contacts are provided by Asp-68, Val-71, Gly-73, Asp-75, and Ser-77. The N-linked (GlcNAc...) asparagine glycan is linked to Asn-81. A substrate-binding site is contributed by Pro-164. The N-linked (GlcNAc...) asparagine glycan is linked to Asn-172. Residue His-194 participates in heme b binding. Ca(2+) is bound at residue Thr-195. N-linked (GlcNAc...) asparagine glycosylation occurs at Asn-210. Positions 241, 244, and 249 each coordinate Ca(2+).

This sequence belongs to the peroxidase family. Classical plant (class III) peroxidase subfamily. Requires heme b as cofactor. Ca(2+) serves as cofactor.

It is found in the secreted. The catalysed reaction is 2 a phenolic donor + H2O2 = 2 a phenolic radical donor + 2 H2O. Its function is as follows. Removal of H(2)O(2), oxidation of toxic reductants, biosynthesis and degradation of lignin, suberization, auxin catabolism, response to environmental stresses such as wounding, pathogen attack and oxidative stress. These functions might be dependent on each isozyme/isoform in each plant tissue. In Zea mays (Maize), this protein is Peroxidase 70 (PER70).